The primary structure comprises 195 residues: Myelin-associated neurite-outgrowth inhibitor (195 aa).

Residues 1 to 18 (MNPVYSPGSSGVPYANAK) lie on the Cytoplasmic side of the membrane. A helical membrane pass occupies residues 19-43 (GIGYPAGFPMGYAAAAPAYSPNMYA). The Extracellular portion of the chain corresponds to 44 to 143 (GPNPAFQPGY…APIPQPRGNG (100 aa)). A helical transmembrane segment spans residues 144-162 (VAMGMVAGTTMAMSAGTLL). The Cytoplasmic portion of the chain corresponds to 163 to 195 (TSHYPTPVAPHQVTMPTYRPPGTPTYSYVPPQW).

Belongs to the FAM168 family.

It localises to the cytoplasm. It is found in the perinuclear region. Its subcellular location is the cell membrane. The protein resides in the cell projection. The protein localises to the axon. Inhibitor of neuronal axonal outgrowth. This Xenopus tropicalis (Western clawed frog) protein is Myelin-associated neurite-outgrowth inhibitor (fam168b).